The following is a 475-amino-acid chain: Methylenomycin A resistance protein (475 aa).

Helical transmembrane passes span 28 to 48 (ITAL…VNVA), 65 to 85 (WIVD…GGLA), 93 to 113 (VYLW…LAPT), 123 to 143 (VQGA…VFSF), 152 to 172 (MLGL…TVGG), 173 to 193 (LMVS…IGAI), 212 to 232 (LAVP…FALI), 240 to 260 (TAGP…LLAL), 285 to 305 (LVGF…GLYF), 314 to 334 (FQAG…NIVY), 346 to 366 (LLTA…TITA), 371 to 391 (WVVA…SPGM), 416 to 436 (QIGS…TSDW), and 439 to 459 (GAAI…LSAW).

The protein belongs to the major facilitator superfamily.

It is found in the cell membrane. Resistance to the epoxide antibiotic methylenomycin A; probably by mediating its efflux. In Streptomyces coelicolor (strain ATCC BAA-471 / A3(2) / M145), this protein is Methylenomycin A resistance protein (mmr).